A 186-amino-acid polypeptide reads, in one-letter code: Ribosome-recycling factor (186 aa).

The protein belongs to the RRF family.

It is found in the cytoplasm. Functionally, responsible for the release of ribosomes from messenger RNA at the termination of protein biosynthesis. May increase the efficiency of translation by recycling ribosomes from one round of translation to another. The polypeptide is Ribosome-recycling factor (Burkholderia cenocepacia (strain HI2424)).